Here is a 306-residue protein sequence, read N- to C-terminus: D-alanine--D-alanine ligase (306 aa).

The ATP-grasp domain maps to 107–300 (KAAYRTAGLP…FGQLCAWLVE (194 aa)). 134–184 (IAPPYVVKPNNEGSSVGIYIVHEATNSPPQLSEEMPAQVMVEAYAPGREMT) contacts ATP. Residues Asp251, Glu267, and Asn269 each contribute to the Mg(2+) site.

It belongs to the D-alanine--D-alanine ligase family. Mg(2+) serves as cofactor. The cofactor is Mn(2+).

Its subcellular location is the cytoplasm. The enzyme catalyses 2 D-alanine + ATP = D-alanyl-D-alanine + ADP + phosphate + H(+). It participates in cell wall biogenesis; peptidoglycan biosynthesis. Functionally, cell wall formation. The sequence is that of D-alanine--D-alanine ligase from Ruegeria sp. (strain TM1040) (Silicibacter sp.).